Here is a 903-residue protein sequence, read N- to C-terminus: FIGNL1-interacting regulator of recombination and mitosis (903 aa).

A phosphoserine mark is found at serine 101 and serine 795. Lysine 843 is modified (N6-acetyllysine).

In terms of assembly, interacts (via its N-terminal region) with PLK1; controls PLK1 kinase activity. Interacts (via the KVVXF motif) with PPP1CC; controls PLK1 kinase activity. Interacts with FIGNL1; may regulate homologous recombination. Phosphorylation at Ser-101 by PLK1 strengthens FIRRM-PLK1 interaction. Phosphorylation at Ser-795 by PLK1 negatively regulates its interaction with PPP1CC.

It is found in the chromosome. It localises to the centromere. Its subcellular location is the kinetochore. The protein localises to the nucleus. The protein resides in the midbody. It is found in the cytoplasm. It localises to the cytoskeleton. Its subcellular location is the spindle. Functionally, regulates PLK1 kinase activity at kinetochores and promotes faithful chromosome segregation in prometaphase by bridging kinase and phosphatase activities. Phosphorylation of FIRRM by PLK1 negatively regulates its interaction with the phosphatase, PPP1CC, thus creating a negative feedback loop for maintaining proper PLK1 kinase activity during mitosis. In complex with FIGL1 may regulate homologous recombination. This chain is FIGNL1-interacting regulator of recombination and mitosis, found in Mus musculus (Mouse).